Here is a 373-residue protein sequence, read N- to C-terminus: 4-hydroxy-3-methylbut-2-en-1-yl diphosphate synthase (flavodoxin) (373 aa).

4 residues coordinate [4Fe-4S] cluster: Cys-270, Cys-273, Cys-305, and Glu-312.

The protein belongs to the IspG family. [4Fe-4S] cluster is required as a cofactor.

It carries out the reaction (2E)-4-hydroxy-3-methylbut-2-enyl diphosphate + oxidized [flavodoxin] + H2O + 2 H(+) = 2-C-methyl-D-erythritol 2,4-cyclic diphosphate + reduced [flavodoxin]. It functions in the pathway isoprenoid biosynthesis; isopentenyl diphosphate biosynthesis via DXP pathway; isopentenyl diphosphate from 1-deoxy-D-xylulose 5-phosphate: step 5/6. Its function is as follows. Converts 2C-methyl-D-erythritol 2,4-cyclodiphosphate (ME-2,4cPP) into 1-hydroxy-2-methyl-2-(E)-butenyl 4-diphosphate. This Erwinia tasmaniensis (strain DSM 17950 / CFBP 7177 / CIP 109463 / NCPPB 4357 / Et1/99) protein is 4-hydroxy-3-methylbut-2-en-1-yl diphosphate synthase (flavodoxin).